We begin with the raw amino-acid sequence, 169 residues long: E1B protein, small T-antigen (169 aa).

It belongs to the adenoviridae E1B 19 kDa protein family.

This chain is E1B protein, small T-antigen, found in Canis lupus familiaris (Dog).